Here is a 96-residue protein sequence, read N- to C-terminus: Co-chaperonin GroES (96 aa).

Belongs to the GroES chaperonin family. Heptamer of 7 subunits arranged in a ring. Interacts with the chaperonin GroEL.

Its subcellular location is the cytoplasm. Together with the chaperonin GroEL, plays an essential role in assisting protein folding. The GroEL-GroES system forms a nano-cage that allows encapsulation of the non-native substrate proteins and provides a physical environment optimized to promote and accelerate protein folding. GroES binds to the apical surface of the GroEL ring, thereby capping the opening of the GroEL channel. The polypeptide is Co-chaperonin GroES (Wolbachia pipientis wMel).